Consider the following 254-residue polypeptide: Metalloprotease YcaL (254 aa).

A signal peptide spans methionine 1 to glycine 19. A lipid anchor (N-palmitoyl cysteine) is attached at cysteine 20. Cysteine 20 carries the S-diacylglycerol cysteine lipid modification. A Zn(2+)-binding site is contributed by histidine 134. The active site involves glutamate 135. 2 residues coordinate Zn(2+): histidine 138 and glutamate 193. Residues glycine 227–lysine 254 form a disordered region. Basic and acidic residues predominate over residues arginine 242 to lysine 254.

It belongs to the peptidase M48B family. Zn(2+) is required as a cofactor.

The protein resides in the cell inner membrane. Involved in the degradation of the LPS-assembly protein LptD. Degrades LptD that have engaged the Bam complex but are stalled at an early step in the outer membrane protein assembly process. The sequence is that of Metalloprotease YcaL (ycaL) from Escherichia coli (strain K12).